Consider the following 451-residue polypeptide: UPF0210 protein CA_C0479 (451 aa).

This sequence belongs to the UPF0210 family. In terms of assembly, homodimer.

The polypeptide is UPF0210 protein CA_C0479 (Clostridium acetobutylicum (strain ATCC 824 / DSM 792 / JCM 1419 / IAM 19013 / LMG 5710 / NBRC 13948 / NRRL B-527 / VKM B-1787 / 2291 / W)).